A 622-amino-acid chain; its full sequence is Low affinity potassium transport system protein Kup (622 aa).

Helical transmembrane passes span 9-29, 49-69, 103-123, 137-157, 165-185, 213-233, 247-267, 276-296, 337-357, 363-383, 396-416, and 419-439; these read LPAI…TSPL, VFGF…IKYL, VIMG…TPAI, PQLD…LFMI, VGKL…GLGL, VSFI…ALYA, WFTV…ALLL, PFFL…AALA, IYIP…IVSF, LAAA…ILST, FVAL…TANL, and LLSG…VMTT.

Belongs to the HAK/KUP transporter (TC 2.A.72) family.

The protein localises to the cell inner membrane. The enzyme catalyses K(+)(in) + H(+)(in) = K(+)(out) + H(+)(out). Functionally, responsible for the low-affinity transport of potassium into the cell. Likely operates as a K(+):H(+) symporter. The protein is Low affinity potassium transport system protein Kup of Escherichia fergusonii (strain ATCC 35469 / DSM 13698 / CCUG 18766 / IAM 14443 / JCM 21226 / LMG 7866 / NBRC 102419 / NCTC 12128 / CDC 0568-73).